A 473-amino-acid polypeptide reads, in one-letter code: Protein AUXIN RESPONSE 4 (473 aa).

A compositionally biased stretch (acidic residues) spans 1 to 10 (MAIITEEEED). The interval 1–38 (MAIITEEEEDPKTLNPPKNKPKDSDFTKSESTMKNPKP) is disordered. The segment covering 29-38 (SESTMKNPKP) has biased composition (polar residues). A helical membrane pass occupies residues 44-64 (FPFWFYFTVVVSLATIIFISL). Residues 119–283 (TVVIVHGLGL…DSSISPALPL (165 aa)) form the AB hydrolase-1 domain.

In terms of tissue distribution, most abundant in root tissue, lesser amounts in rosette leaves, stems and flowers and very little in mature siliques.

Its subcellular location is the endoplasmic reticulum membrane. Functionally, required for the auxin influx facilitator AUX1 polar trafficking and its asymmetric localization within the plasma membrane. Not involved in the PIN proteins localization. This chain is Protein AUXIN RESPONSE 4 (AXR4), found in Arabidopsis thaliana (Mouse-ear cress).